The chain runs to 750 residues: GTP pyrophosphokinase rsh (750 aa).

In terms of domain architecture, HD spans 45–144 (YFSHPLEVAA…VKLADRLHNM (100 aa)). One can recognise a TGS domain in the interval 390-451 (DQVFCFTPKG…KNGDEVDIIR (62 aa)). The disordered stretch occupies residues 587 to 613 (AAKVDPAATTPKPGKRALPIRGTNPDL). One can recognise an ACT domain in the interval 676-750 (RISVSAINSP…SVSSAKRVNG (75 aa)).

It belongs to the RelA/SpoT family.

The catalysed reaction is GTP + ATP = guanosine 3'-diphosphate 5'-triphosphate + AMP. Functions as a (p)ppGpp synthase. In eubacteria ppGpp (guanosine 3'-diphosphate 5'-diphosphate) is a mediator of the stringent response that coordinates a variety of cellular activities in response to changes in nutritional abundance. Plays a role in adaptation of Brucella to its intracellular host environment. This chain is GTP pyrophosphokinase rsh (rsh), found in Brucella abortus (strain 2308).